The chain runs to 293 residues: MPWIQLTLSCSEEHAPQVGDMLMANGAQAVTYRDGADTPIFEPRPGDVILWEHTLATGLFDADADIKAIIANLKQSNIFGSDLQYKVDALEDKDWEREWMDNFHPIQFGENLWICPSWREIPKPEAVNILLDPGMAFGTGTHPTTAMCLRWIDANPPTGKTVVDFGCGSGILGIAALLFKAEHVVGIDIDQQALIATKDNAERNKVGDKFSLYLPSQQPETQVDLVLANVLAGPLRELADTILGFVSPGGQLVLSGILERQIEGVIEAYQPHIKFDTPTIDGDWAMLSGTRVG.

Residues Thr-145, Gly-166, Asp-188, and Asn-229 each coordinate S-adenosyl-L-methionine.

The protein belongs to the methyltransferase superfamily. PrmA family.

It is found in the cytoplasm. It catalyses the reaction L-lysyl-[protein] + 3 S-adenosyl-L-methionine = N(6),N(6),N(6)-trimethyl-L-lysyl-[protein] + 3 S-adenosyl-L-homocysteine + 3 H(+). Functionally, methylates ribosomal protein L11. The polypeptide is Ribosomal protein L11 methyltransferase (Idiomarina loihiensis (strain ATCC BAA-735 / DSM 15497 / L2-TR)).